A 312-amino-acid polypeptide reads, in one-letter code: Pyridoxal 5'-phosphate synthase subunit PDX1 (312 aa).

D-ribose 5-phosphate is bound at residue D43. K100 serves as the catalytic Schiff-base intermediate with D-ribose 5-phosphate. G172 contacts D-ribose 5-phosphate. R184 provides a ligand contact to D-glyceraldehyde 3-phosphate. Residues G233 and 254–255 (GS) each bind D-ribose 5-phosphate.

Belongs to the PdxS/SNZ family.

It catalyses the reaction aldehydo-D-ribose 5-phosphate + D-glyceraldehyde 3-phosphate + L-glutamine = pyridoxal 5'-phosphate + L-glutamate + phosphate + 3 H2O + H(+). It participates in cofactor biosynthesis; pyridoxal 5'-phosphate biosynthesis. Its function is as follows. Catalyzes the formation of pyridoxal 5'-phosphate from ribose 5-phosphate (RBP), glyceraldehyde 3-phosphate (G3P) and ammonia. The ammonia is provided by PDX2. Can also use ribulose 5-phosphate and dihydroxyacetone phosphate as substrates, resulting from enzyme-catalyzed isomerization of RBP and G3P, respectively. Also plays an indirect role in resistance to singlet oxygen-generating photosensitizers. In Phaseolus vulgaris (Kidney bean), this protein is Pyridoxal 5'-phosphate synthase subunit PDX1 (PDX1).